Here is a 365-residue protein sequence, read N- to C-terminus: Succinyl-diaminopimelate desuccinylase (365 aa).

H65 serves as a coordination point for Zn(2+). The active site involves D67. D96 contributes to the Zn(2+) binding site. E126 serves as the catalytic Proton acceptor. The Zn(2+) site is built by E127, E155, and H340.

Belongs to the peptidase M20A family. DapE subfamily. In terms of assembly, homodimer. It depends on Zn(2+) as a cofactor. Co(2+) serves as cofactor.

It catalyses the reaction N-succinyl-(2S,6S)-2,6-diaminopimelate + H2O = (2S,6S)-2,6-diaminopimelate + succinate. It participates in amino-acid biosynthesis; L-lysine biosynthesis via DAP pathway; LL-2,6-diaminopimelate from (S)-tetrahydrodipicolinate (succinylase route): step 3/3. In terms of biological role, catalyzes the hydrolysis of N-succinyl-L,L-diaminopimelic acid (SDAP), forming succinate and LL-2,6-diaminopimelate (DAP), an intermediate involved in the bacterial biosynthesis of lysine and meso-diaminopimelic acid, an essential component of bacterial cell walls. This chain is Succinyl-diaminopimelate desuccinylase, found in Campylobacter jejuni subsp. jejuni serotype O:6 (strain 81116 / NCTC 11828).